The chain runs to 284 residues: Avenin-like b9 (284 aa).

The first 18 residues, 1–18 (MKVFILALLALAATTAIA), serve as a signal peptide directing secretion.

It belongs to the prolamin family. In terms of processing, contains disulfide bonds.

Functionally, seed storage protein. Might be integrated via inter-chain disulfide bonds within the glutenin polymer. This chain is Avenin-like b9, found in Triticum aestivum (Wheat).